A 312-amino-acid chain; its full sequence is Small ribosomal subunit protein RACK1 (312 aa).

WD repeat units lie at residues 9–42 (GHRGWVTSLACPQQAGSYIKVVSTSRDGTVISWK), 63–93 (GHTGFVSCVSLAHATDYALTASWDRSIRMWD), 105–135 (KHTKDVLAVAFSPDDRLIVSAGRDNVIRVWN), 148–180 (GHEDWVSSICFSPSLEHPIVVSGSWDNTIKVWN), 192–222 (GHSNYVSTVTVSPDGSLCASGGKDGAALLWD), 233–262 (NVESPINQIGFSPNRFWMCVATERSLSVYD), and 279–307 (PSECISIAWSADGNTLYSGHKDNLIRVWS).

It belongs to the WD repeat G protein beta family. Ribosomal protein RACK1 subfamily.

The polypeptide is Small ribosomal subunit protein RACK1 (Leishmania major).